A 169-amino-acid chain; its full sequence is Menaquinol:cytochrome c reductase iron-sulfur subunit (169 aa).

Residues 62 to 160 (EPKRFDFKVK…FEVKDGKLYL (99 aa)) enclose the Rieske domain. Positions 102, 104, 123, and 126 each coordinate [2Fe-2S] cluster. A disulfide bridge connects residues Cys-107 and Cys-125.

The protein belongs to the Rieske iron-sulfur protein family. In terms of assembly, the main subunits of the menaquinol:cytochrome c complex are a Rieske-type iron-sulfur protein (QcrA), a cytochrome b (QcrB) and a cytochrome c (QcrC). [2Fe-2S] cluster is required as a cofactor.

Its function is as follows. Component of the menaquinol:cytochrome c reductase complex. The Rieske protein is a high potential 2Fe-2S protein. This chain is Menaquinol:cytochrome c reductase iron-sulfur subunit (qcrA), found in Geobacillus thermodenitrificans.